The sequence spans 95 residues: Putative pterin-4-alpha-carbinolamine dehydratase (95 aa).

Belongs to the pterin-4-alpha-carbinolamine dehydratase family.

It carries out the reaction (4aS,6R)-4a-hydroxy-L-erythro-5,6,7,8-tetrahydrobiopterin = (6R)-L-erythro-6,7-dihydrobiopterin + H2O. In Nocardia farcinica (strain IFM 10152), this protein is Putative pterin-4-alpha-carbinolamine dehydratase.